The sequence spans 377 residues: Actin-related protein T2 (377 aa).

This sequence belongs to the actin family.

Its subcellular location is the cytoplasm. The protein localises to the cytoskeleton. This Macaca fascicularis (Crab-eating macaque) protein is Actin-related protein T2 (ACTRT2).